The primary structure comprises 100 residues: Urease subunit gamma (100 aa).

The protein belongs to the urease gamma subunit family. Heterotrimer of UreA (gamma), UreB (beta) and UreC (alpha) subunits. Three heterotrimers associate to form the active enzyme.

Its subcellular location is the cytoplasm. The enzyme catalyses urea + 2 H2O + H(+) = hydrogencarbonate + 2 NH4(+). It participates in nitrogen metabolism; urea degradation; CO(2) and NH(3) from urea (urease route): step 1/1. This chain is Urease subunit gamma, found in Parasynechococcus marenigrum (strain WH8102).